A 654-amino-acid chain; its full sequence is MLLRPNSGNTLKYGCLLTKRWLTTSKLLYSVEDMKIKIGQEQYRKALEERIDKIPIENYRNFSIVAHVDHGKSTLSDRLLEMTGVIKPGSKSQVLDKLDVERERGITVKAQTVSMFYNDGKQDYLLHLVDTPGHVDFRAEVSRSYASCGGALLLVDASQGVQAQTVANFYLAYSMGLKLIPIINKIDLDSANIPGAREQIETTFELDPNECIPVSAKTGLNVEQIIPSVIKNIPSPVCDVNKPLRALLVDSWHDPYVGVVMLVHIVDGRMKKGMKILSAHTNRTYDVKEVGIMYPDRTPTSFIKAGQVAYIIPGMKNPREALVGDTFYQMGKHEGLEPLPGFEEPKPMVFVGAFPADGKEFNAMDDQMQNLVLNDRSVTLEQETSNALGLGWRLGFLGSLHASVFKERLEKEYGAKIILTAPTVPYKIIYKNGEEKIVTNPDDFPDNQKHHDVESYMEPYVEAIMTVPNEYVGNVMTLCLNNRGEQKEIEYLTTGQVLLKYEIPTSQLVEDFFGKLKGCTKGYASLDYEEAGYRKSDIVKMQLCVNGEPQDALTTVIHRSQAQARGKEYVTRFKKFLSYQLFEVAIQAKINNKVVARETIKAKRKDVTQRLHAADISRYKKLLERQKEGKKQMKLSGRVTIKNDAYQAFLRRED.

One can recognise a tr-type G domain in the interval 57–237 (ENYRNFSIVA…SVIKNIPSPV (181 aa)). GTP contacts are provided by residues 66–73 (AHVDHGKS), 130–134 (DTPGH), and 184–187 (NKID).

This sequence belongs to the TRAFAC class translation factor GTPase superfamily. Classic translation factor GTPase family. LepA subfamily.

It is found in the mitochondrion inner membrane. The catalysed reaction is GTP + H2O = GDP + phosphate + H(+). Its function is as follows. Promotes mitochondrial protein synthesis. May act as a fidelity factor of the translation reaction, by catalyzing a one-codon backward translocation of tRNAs on improperly translocated ribosomes. Binds to mitochondrial ribosomes in a GTP-dependent manner. The protein is Translation factor GUF1, mitochondrial of Candida albicans (strain SC5314 / ATCC MYA-2876) (Yeast).